We begin with the raw amino-acid sequence, 363 residues long: tRNA(Met) cytidine acetate ligase (363 aa).

Residues 7 to 20, Gly-96, Asn-152, and Arg-175 contribute to the ATP site; that span reads IAEF…HKYL.

This sequence belongs to the TmcAL family.

The protein resides in the cytoplasm. The enzyme catalyses cytidine(34) in elongator tRNA(Met) + acetate + ATP = N(4)-acetylcytidine(34) in elongator tRNA(Met) + AMP + diphosphate. Functionally, catalyzes the formation of N(4)-acetylcytidine (ac(4)C) at the wobble position of elongator tRNA(Met), using acetate and ATP as substrates. First activates an acetate ion to form acetyladenylate (Ac-AMP) and then transfers the acetyl group to tRNA to form ac(4)C34. This Streptococcus gordonii (strain Challis / ATCC 35105 / BCRC 15272 / CH1 / DL1 / V288) protein is tRNA(Met) cytidine acetate ligase.